The sequence spans 217 residues: Protein-L-isoaspartate O-methyltransferase (217 aa).

The active site involves Ser-61.

Belongs to the methyltransferase superfamily. L-isoaspartyl/D-aspartyl protein methyltransferase family.

Its subcellular location is the cytoplasm. The catalysed reaction is [protein]-L-isoaspartate + S-adenosyl-L-methionine = [protein]-L-isoaspartate alpha-methyl ester + S-adenosyl-L-homocysteine. Its function is as follows. Catalyzes the methyl esterification of L-isoaspartyl residues in peptides and proteins that result from spontaneous decomposition of normal L-aspartyl and L-asparaginyl residues. It plays a role in the repair and/or degradation of damaged proteins. The chain is Protein-L-isoaspartate O-methyltransferase from Syntrophotalea carbinolica (strain DSM 2380 / NBRC 103641 / GraBd1) (Pelobacter carbinolicus).